Reading from the N-terminus, the 802-residue chain is Putative flavin carrier protein 3 (802 aa).

Positions 1-28 (MRFLQVYKSSALIGLIILLASKVNLAEA) are cleaved as a signal peptide. Residues 29-169 (KRKLVATSLV…YFSNGKTVSQ (141 aa)) are Lumenal-facing. The N-linked (GlcNAc...) asparagine glycan is linked to Asn-149. Residues 170–190 (IGVKWATAVVAGIGLLLSAIL) traverse the membrane as a helical segment. Over 191-200 (STFGNSTAAS) the chain is Cytoplasmic. The helical transmembrane segment at 201–221 (HISANTMSLFLYFQSVVVVAM) threads the bilayer. Topologically, residues 222–229 (QHVHRVPP) are lumenal. The chain crosses the membrane as a helical span at residues 230–250 (IAAAWAENLVWSMGLIRISFM). At 251–255 (QRIFR) the chain is on the cytoplasmic side. A helical membrane pass occupies residues 256-278 (WYVQSTGGTPSLYLTSTSMSVLA). Topologically, residues 279–323 (QRSWQYLMELPLIKRATNVLYGNANTLIFRGIKRLGYKMGIENTS) are lumenal. Asn-321 is a glycosylation site (N-linked (GlcNAc...) asparagine). A helical transmembrane segment spans residues 324 to 344 (IVCTGFTFFVLCGYVLAGFII). Residues 345–377 (VFKCCVELATRLGWIQKARFWEFRKQWRMILKG) lie on the Cytoplasmic side of the membrane. Residues 378-398 (ALLRYIYIGFVQLTILSFWEF) traverse the membrane as a helical segment. Topologically, residues 399–405 (TERDSPA) are lumenal. A helical transmembrane segment spans residues 406-426 (VIVIACLFILLSCGLMLWAAW). Over 427–467 (RTVFFARRSVALYNNPAALLYGDEYVLHKYGFFYTMFNANH) the chain is Cytoplasmic. Residues 468-488 (YWWNIVLLSYIFVKSLLVGFA) form a helical membrane-spanning segment. The Lumenal segment spans residues 489–495 (QASGQTQ). Residues 496–516 (VLFMFILDLFYFVAIIYYKPY) form a helical membrane-spanning segment. Residues 517 to 525 (LDRPTNIMN) are Cytoplasmic-facing. A helical transmembrane segment spans residues 526-546 (ILIATVTVVNSFLFMFFSDLF). A glycan (N-linked (GlcNAc...) asparagine) is linked at Asn-547. Over 547–557 (NQSYKVAAIMG) the chain is Lumenal. Residues 558–578 (WIFFIMNAAFSFILLMMILAF) traverse the membrane as a helical segment. Over 579–802 (AGMMLFSKNP…PPGFFDEGFM (224 aa)) the chain is Cytoplasmic. Phosphoserine occurs at positions 616 and 635. The interval 629-802 (KDHDDNSDYE…PPGFFDEGFM (174 aa)) is disordered. 3 stretches are compositionally biased toward polar residues: residues 653–663 (DETTPTTVTSS), 697–717 (KQQTFPHNLTNLSRENLSTLG), and 761–788 (DTSSSDGGFRSQNYVRDDSINSLGNNKQ). Phosphoserine occurs at positions 779 and 782.

The protein belongs to the transient receptor potential (TRP) ion channel family.

Its subcellular location is the endoplasmic reticulum membrane. Functionally, may be responsible for the transport of FAD into the endoplasmic reticulum lumen, where it is required for oxidative protein folding. This chain is Putative flavin carrier protein 3 (FLC3), found in Saccharomyces cerevisiae (strain ATCC 204508 / S288c) (Baker's yeast).